The chain runs to 324 residues: Glucosyl-3-phosphoglycerate synthase (324 aa).

Residues Pro-50–Glu-54, Ser-81, Lys-114, and Asp-134–Ser-135 each bind UDP-alpha-D-glucose. Asp-136 contributes to the Mn(2+) binding site. A (2R)-3-phosphoglycerate-binding site is contributed by Gly-184–Thr-187. Residues Tyr-229–Glu-232 and Arg-256–Arg-261 each bind UDP-alpha-D-glucose. His-258 is a Mn(2+) binding site. Asn-260 serves as a coordination point for (2R)-3-phosphoglycerate.

Belongs to the glycosyltransferase 2 family. In terms of assembly, homotrimer. Mg(2+) serves as cofactor. The cofactor is Mn(2+).

It carries out the reaction an NDP-alpha-D-glucose + (2R)-3-phosphoglycerate = (2R)-2-O-(alpha-D-glucopyranosyl)-3-phospho-glycerate + a ribonucleoside 5'-diphosphate + H(+). The enzyme catalyses (2R)-3-phosphoglycerate + UDP-alpha-D-glucose = (2R)-2-O-(alpha-D-glucopyranosyl)-3-phospho-glycerate + UDP + H(+). It catalyses the reaction ADP-alpha-D-glucose + (2R)-3-phosphoglycerate = (2R)-2-O-(alpha-D-glucopyranosyl)-3-phospho-glycerate + ADP + H(+). The catalysed reaction is GDP-D-glucose + (2R)-3-phosphoglycerate = (2R)-2-O-(alpha-D-glucopyranosyl)-3-phospho-glycerate + GDP + H(+). Involved in the biosynthesis of 6-O-methylglucose lipopolysaccarides (MGLPs). Catalyzes the transfer of the glucose moiety from a nuleotide sugar such as UDP-alpha-D-glucose to the position 2 of 3-phospho-D-glycerate (3-PGA) to form glucosyl-3-phosphoglycerate (GPG). It can use UDP-glucose, ADP-glucose and GDP-glucose as sugar donor substrates with decreasing affinity and with 3-PGA as an acceptor. D-glycerate can only be an acceptor with ADP-glucose and at a very low rate. The protein is Glucosyl-3-phosphoglycerate synthase (gpgS) of Mycobacterium bovis (strain ATCC BAA-935 / AF2122/97).